The primary structure comprises 229 residues: Lytic polysaccharide monooxygenase-like protein ham-7 (229 aa).

An N-terminal signal peptide occupies residues 1 to 17 (MLTSTLLALASAALASA). H18 contributes to the Cu(2+) binding site. 2 disulfides stabilise this stretch: C47–C157 and C122–C178. 5 N-linked (GlcNAc...) asparagine glycosylation sites follow: N55, N98, N139, N174, and N180. The GPI-anchor amidated serine moiety is linked to residue S206. The propeptide at 207-229 (AAASLARMAGWVPLVAGGLWLML) is removed in mature form.

This sequence belongs to the X325 family. The cofactor is Cu(2+).

The protein localises to the cell membrane. In terms of biological role, lytic polysaccharide monooxygenase-like protein that has diverged to biological functions other than polysaccharide degradation since it does not perform oxidative cleavage of polysaccharides. Acts as the major cell wall sensor that regulates MAK-1-dependent hyphal anastomosis, the fusion of hyphal cells. May also act as a cell surface-bound protein that functions in the copper-accumulation pathway. The chain is Lytic polysaccharide monooxygenase-like protein ham-7 from Neurospora crassa (strain ATCC 24698 / 74-OR23-1A / CBS 708.71 / DSM 1257 / FGSC 987).